The primary structure comprises 212 residues: MRKVLLTGFEPFGGESINPSLELVKQMASRALPQVEIIGCEVPVVRYQAIETVLQAVETHQPDLVLMIGQASGRCAITPERVAINLDDYRIEDNAGHQPVDEPIIATGPAAYFSTLPVKAITHALQQAGIPCQLSHSAGTFVCNHLFYGVQHHLHTRAIRSGFIHIPLLPEQASASNQPSMSLETLVHGLEMMMMTCLETEQDTKHTGGTIC.

Active-site residues include E80, C143, and H165.

This sequence belongs to the peptidase C15 family. In terms of assembly, homotetramer.

Its subcellular location is the cytoplasm. It carries out the reaction Release of an N-terminal pyroglutamyl group from a polypeptide, the second amino acid generally not being Pro.. In terms of biological role, removes 5-oxoproline from various penultimate amino acid residues except L-proline. This is Pyrrolidone-carboxylate peptidase from Vibrio vulnificus (strain CMCP6).